We begin with the raw amino-acid sequence, 321 residues long: tRNA-dihydrouridine synthase B (321 aa).

FMN is bound by residues 16-18 (PMA) and glutamine 70. The active-site Proton donor is the cysteine 100. FMN is bound by residues lysine 139, 200–202 (NGD), and 224–225 (GR).

This sequence belongs to the Dus family. DusB subfamily. The cofactor is FMN.

It catalyses the reaction a 5,6-dihydrouridine in tRNA + NAD(+) = a uridine in tRNA + NADH + H(+). The enzyme catalyses a 5,6-dihydrouridine in tRNA + NADP(+) = a uridine in tRNA + NADPH + H(+). Its function is as follows. Catalyzes the synthesis of 5,6-dihydrouridine (D), a modified base found in the D-loop of most tRNAs, via the reduction of the C5-C6 double bond in target uridines. This Salmonella typhi protein is tRNA-dihydrouridine synthase B.